The primary structure comprises 813 residues: DNA gyrase subunit A (813 aa).

The Topo IIA-type catalytic domain occupies 38-504 (LPDVRDGLKP…EIEYLDVEDF (467 aa)). Tyr126 serves as the catalytic O-(5'-phospho-DNA)-tyrosine intermediate. A GyrA-box motif is present at residues 531–537 (QNRGGKG).

This sequence belongs to the type II topoisomerase GyrA/ParC subunit family. As to quaternary structure, heterotetramer, composed of two GyrA and two GyrB chains. In the heterotetramer, GyrA contains the active site tyrosine that forms a transient covalent intermediate with DNA, while GyrB binds cofactors and catalyzes ATP hydrolysis.

Its subcellular location is the cytoplasm. The catalysed reaction is ATP-dependent breakage, passage and rejoining of double-stranded DNA.. Functionally, a type II topoisomerase that negatively supercoils closed circular double-stranded (ds) DNA in an ATP-dependent manner to modulate DNA topology and maintain chromosomes in an underwound state. Negative supercoiling favors strand separation, and DNA replication, transcription, recombination and repair, all of which involve strand separation. Also able to catalyze the interconversion of other topological isomers of dsDNA rings, including catenanes and knotted rings. Type II topoisomerases break and join 2 DNA strands simultaneously in an ATP-dependent manner. This is DNA gyrase subunit A from Treponema pallidum (strain Nichols).